Reading from the N-terminus, the 283-residue chain is Pyridoxine/pyridoxal/pyridoxamine kinase (283 aa).

Residues serine 23 and histidine 59 each contribute to the substrate site. Aspartate 125 lines the ATP pocket. A Mg(2+)-binding site is contributed by tyrosine 136. Residues threonine 157, glutamate 162, threonine 195, 222–225 (HAHV), and threonine 232 each bind ATP. Glutamate 162 contributes to the Mg(2+) binding site. Residue aspartate 234 coordinates substrate.

This sequence belongs to the pyridoxine kinase family. PdxK subfamily. As to quaternary structure, homodimer. The cofactor is Mg(2+).

The enzyme catalyses pyridoxal + ATP = pyridoxal 5'-phosphate + ADP + H(+). It catalyses the reaction pyridoxine + ATP = pyridoxine 5'-phosphate + ADP + H(+). It carries out the reaction pyridoxamine + ATP = pyridoxamine 5'-phosphate + ADP + H(+). The protein operates within cofactor metabolism; pyridoxal 5'-phosphate salvage; pyridoxal 5'-phosphate from pyridoxal: step 1/1. It participates in cofactor metabolism; pyridoxal 5'-phosphate salvage; pyridoxine 5'-phosphate from pyridoxine: step 1/1. It functions in the pathway cofactor metabolism; pyridoxal 5'-phosphate salvage; pyridoxamine 5'-phosphate from pyridoxamine: step 1/1. B6-vitamer kinase involved in the salvage pathway of pyridoxal 5'-phosphate (PLP). Catalyzes the phosphorylation of pyridoxine (PN), pyridoxal (PL), and pyridoxamine (PM), forming their respective 5'-phosphorylated esters, i.e. PNP, PLP and PMP. This Bordetella pertussis (strain Tohama I / ATCC BAA-589 / NCTC 13251) protein is Pyridoxine/pyridoxal/pyridoxamine kinase.